A 429-amino-acid polypeptide reads, in one-letter code: Adenylosuccinate synthetase (429 aa).

GTP contacts are provided by residues 12-18 (GDEGKGK) and 40-42 (GHT). The active-site Proton acceptor is the Asp-13. Residues Asp-13 and Gly-40 each contribute to the Mg(2+) site. Residues 13 to 16 (DEGK), 38 to 41 (NAGH), Thr-129, Arg-143, Gln-223, Thr-238, and Arg-302 each bind IMP. The active-site Proton donor is His-41. 298–304 (VVTGRKR) contacts substrate. GTP contacts are provided by residues Arg-304, 330-332 (KLD), and 412-414 (STS).

This sequence belongs to the adenylosuccinate synthetase family. In terms of assembly, homodimer. The cofactor is Mg(2+).

The protein resides in the cytoplasm. It catalyses the reaction IMP + L-aspartate + GTP = N(6)-(1,2-dicarboxyethyl)-AMP + GDP + phosphate + 2 H(+). The protein operates within purine metabolism; AMP biosynthesis via de novo pathway; AMP from IMP: step 1/2. Its function is as follows. Plays an important role in the de novo pathway of purine nucleotide biosynthesis. Catalyzes the first committed step in the biosynthesis of AMP from IMP. This chain is Adenylosuccinate synthetase, found in Brucella anthropi (strain ATCC 49188 / DSM 6882 / CCUG 24695 / JCM 21032 / LMG 3331 / NBRC 15819 / NCTC 12168 / Alc 37) (Ochrobactrum anthropi).